A 401-amino-acid polypeptide reads, in one-letter code: Glutamyl-tRNA reductase (401 aa).

Residues 49–52 (TCNR), S92, 97–99 (END), and Q103 each bind substrate. Residue C50 is the Nucleophile of the active site. Position 171-176 (171-176 (GNGKMA)) interacts with NADP(+).

It belongs to the glutamyl-tRNA reductase family. Homodimer.

It carries out the reaction (S)-4-amino-5-oxopentanoate + tRNA(Glu) + NADP(+) = L-glutamyl-tRNA(Glu) + NADPH + H(+). It functions in the pathway porphyrin-containing compound metabolism; protoporphyrin-IX biosynthesis; 5-aminolevulinate from L-glutamyl-tRNA(Glu): step 1/2. Catalyzes the NADPH-dependent reduction of glutamyl-tRNA(Glu) to glutamate 1-semialdehyde (GSA). The chain is Glutamyl-tRNA reductase from Picrophilus torridus (strain ATCC 700027 / DSM 9790 / JCM 10055 / NBRC 100828 / KAW 2/3).